The chain runs to 1481 residues: Cystic fibrosis transmembrane conductance regulator (1481 aa).

Topologically, residues 1–77 (MQRSPLEKAS…KLINALRRCF (77 aa)) are cytoplasmic. The helical transmembrane segment at 78 to 98 (FWRFMFYGIILYLGEVTKAVQ) threads the bilayer. Residues 81–365 (FMFYGIILYL…WAVQTWYDSL (285 aa)) form the ABC transmembrane type-1 1 domain. At 99–122 (PLLLGRIIASYDPDNKVERSIAIY) the chain is on the extracellular side. Residues 123–146 (LGIGLCLLFIVRTLLLHPAIFGLH) form a helical membrane-spanning segment. Residues 147-195 (HIGMQMRIAMFSLIYKKTLKLSSRVLDKISIGQLVSLLSNNLNKFDEGL) lie on the Cytoplasmic side of the membrane. A helical membrane pass occupies residues 196-216 (ALAHFVWIAPLQVTLLMGLLW). Topologically, residues 217–222 (ELLQAF) are extracellular. A helical transmembrane segment spans residues 223 to 243 (TFCGLAFLVVLAFLQAGLGKM). Residues 244–298 (MMKYRDQRAGKINERLVITSEIIENIQSVKAYCWEEAMEKIIENLRQTELKLTRK) are Cytoplasmic-facing. Residues 299-319 (AAYVRYLNSSAFFFSGFFVVF) form a helical membrane-spanning segment. Residues 320-339 (LSVLPYALLKGIILRKIFTT) lie on the Extracellular side of the membrane. The helical transmembrane segment at 340–358 (ISFCIVLRMAVTRQFPWAV) threads the bilayer. The Cytoplasmic portion of the chain corresponds to 359-858 (QTWYDSLGAI…YLRYITVHKS (500 aa)). ATP contacts are provided by residues W401, 457 to 464 (GSTGAGKT), and Q492. The 223-residue stretch at 423–645 (NGDNNLFFSN…RPDFSSKLMG (223 aa)) folds into the ABC transporter 1 domain. C523 is lipidated: S-palmitoyl cysteine. Phosphoserine occurs at positions 548 and 659. Positions 653–831 (TAERRNSIIT…EEINEEDLRD (179 aa)) are disordered R region. A Phosphoserine; by PKA modification is found at S669. S685 carries the phosphoserine modification. A Glycyl lysine isopeptide (Lys-Gly) (interchain with G-Cter in ubiquitin) cross-link involves residue K687. Phosphoserine is present on residues S699 and S711. A Phosphothreonine modification is found at T716. S736, S767, S790, S795, and S813 each carry phosphoserine. The helical transmembrane segment at 859 to 879 (LMFVLIWCLVVFLAEVAASLV) threads the bilayer. One can recognise an ABC transmembrane type-1 2 domain in the interval 859 to 1155 (LMFVLIWCLV…AVNSSIDVDS (297 aa)). The Extracellular segment spans residues 880 to 918 (VLCLFPKILFQDKGNSTKSANNSYAVIITSTSSYYIFYI). N-linked (GlcNAc...) asparagine glycans are attached at residues N894 and N900. The discontinuously helical transmembrane segment at 919-939 (YVGVADTLLALGLFRGLPLVH) threads the bilayer. At 940-990 (TLITVSKTLHHKMLQSVLQAPMSTLNTLKTGGILNRFSKDIAVLDDLLPLT) the chain is on the cytoplasmic side. Residues 991–1011 (IFDFVQLLLIVIGAVVVVSVL) traverse the membrane as a helical segment. Topologically, residues 1012–1013 (QP) are extracellular. The helical transmembrane segment at 1014–1034 (YIFLATVPVIAAFILLRAYFL) threads the bilayer. The Cytoplasmic segment spans residues 1035–1095 (HTSQQLKQLE…TANWFLYLST (61 aa)). Residues 1096–1116 (LRWFQMRIEMIFVIFFIAVTF) form a helical membrane-spanning segment. Residues 1117–1130 (ISILTTGEGEGRVG) lie on the Extracellular side of the membrane. A helical membrane pass occupies residues 1131–1151 (IILTLAMNIMGTLQWAVNSSI). Over 1152 to 1481 (DVDSLMRSVS…TEEEVQETKL (330 aa)) the chain is Cytoplasmic. The 234-residue stretch at 1211–1444 (MTVKDLTAKY…KSLFRQAISP (234 aa)) folds into the ABC transporter 2 domain. ATP contacts are provided by residues Y1220 and 1245–1252 (GRTGSGKS). The tract at residues 1387 to 1481 (RTLKQAFADC…TEEEVQETKL (95 aa)) is interaction with GORASP2. The S-palmitoyl cysteine moiety is linked to residue C1396. The tract at residues 1452 to 1481 (PQRNSSRQKSRSNIAALKEETEEEVQETKL) is disordered. The segment covering 1453–1464 (QRNSSRQKSRSN) has biased composition (low complexity). S1457 is modified (phosphoserine). The segment covering 1471-1481 (ETEEEVQETKL) has biased composition (acidic residues). The PDZ-binding signature appears at 1479–1481 (TKL).

This sequence belongs to the ABC transporter superfamily. ABCC family. CFTR transporter (TC 3.A.1.202) subfamily. As to quaternary structure, monomer; does not require oligomerization for channel activity. May form oligomers in the membrane. Interacts with SLC26A3, SLC26A6 and NHERF1. Interacts with SHANK2. Interacts with MYO6. Interacts (via C-terminus) with GOPC (via PDZ domain); this promotes CFTR internalization and thereby decreases channel activity. Interacts with SLC4A7 through NHERF1. Found in a complex with MYO5B and RAB11A. Interacts with ANO1. Interacts with SLC26A8. Interacts with AHCYL1; the interaction increases CFTR activity. Interacts with CSE1L. The core-glycosylated form interacts with GORASP2 (via PDZ GRASP-type 1 domain) in respone to ER stress. Interacts with MARCHF2; the interaction leads to CFTR ubiqtuitination and degradation. Interacts with ADGRG2. In terms of processing, N-glycosylated. Phosphorylated; cAMP treatment promotes phosphorylation and activates the channel. Dephosphorylation decreases the ATPase activity (in vitro). Phosphorylation at PKA sites activates the channel. Phosphorylation at PKC sites enhances the response to phosphorylation by PKA. Phosphorylated by AMPK; this inhibits channel activity. Post-translationally, ubiquitinated, leading to its degradation in the lysosome. Deubiquitination by USP10 in early endosomes enhances its endocytic recycling to the cell membrane. Ubiquitinated by RNF185 during ER stress. Ubiquitinated by MARCHF2.

It localises to the apical cell membrane. The protein resides in the early endosome membrane. Its subcellular location is the cell membrane. The protein localises to the recycling endosome membrane. It is found in the endoplasmic reticulum membrane. It localises to the nucleus. It carries out the reaction ATP + H2O + closed Cl(-) channel = ADP + phosphate + open Cl(-) channel.. The catalysed reaction is chloride(in) = chloride(out). It catalyses the reaction hydrogencarbonate(in) = hydrogencarbonate(out). The enzyme catalyses ATP + H2O = ADP + phosphate + H(+). Epithelial ion channel that plays an important role in the regulation of epithelial ion and water transport and fluid homeostasis. Mediates the transport of chloride ions across the cell membrane. Possesses an intrinsic ATPase activity and utilizes ATP to gate its channel; the passive flow of anions through the channel is gated by cycles of ATP binding and hydrolysis by the ATP-binding domains. The ion channel is also permeable to HCO(3)(-); selectivity depends on the extracellular chloride concentration. Exerts its function also by modulating the activity of other ion channels and transporters. Contributes to the regulation of the pH and the ion content of the epithelial fluid layer. Modulates the activity of the epithelial sodium channel (ENaC) complex, in part by regulating the cell surface expression of the ENaC complex. May regulate bicarbonate secretion and salvage in epithelial cells by regulating the transporter SLC4A7. Can inhibit the chloride channel activity of ANO1. Plays a role in the chloride and bicarbonate homeostasis during sperm epididymal maturation and capacitation. This Muntiacus muntjak (Barking deer) protein is Cystic fibrosis transmembrane conductance regulator.